The following is a 146-amino-acid chain: Large ribosomal subunit protein uL15 (146 aa).

A compositionally biased stretch (basic and acidic residues) spans 1 to 13; the sequence is MKLHELKPAEGSR. Residues 1–51 are disordered; it reads MKLHELKPAEGSRKVRNRVGRGIGSGNGKTAGRGHKGQNARSGGGVRLGFE. Composition is skewed to gly residues over residues 21–31 and 42–51; these read RGIGSGNGKTA and SGGGVRLGFE.

The protein belongs to the universal ribosomal protein uL15 family. In terms of assembly, part of the 50S ribosomal subunit.

In terms of biological role, binds to the 23S rRNA. This is Large ribosomal subunit protein uL15 from Bacillus mycoides (strain KBAB4) (Bacillus weihenstephanensis).